The chain runs to 103 residues: Phospholipase A2 large subunit (103 aa).

Ca(2+) is bound by residues Trp-7, Gly-9, and Gly-11. 4 cysteine pairs are disulfide-bonded: Cys-8–Cys-30, Cys-29–Cys-68, Cys-36–Cys-61, and Cys-59–Cys-96. Asn-16 is a glycosylation site (N-linked (GlcNAc...) asparagine). His-33 is a catalytic residue. Asp-34 is a binding site for Ca(2+).

The protein belongs to the phospholipase A2 family. Group III subfamily. As to quaternary structure, heterodimer composed of a large subunit and a small subunit; disulfide-linked. Requires Ca(2+) as cofactor. As to expression, expressed by the venom gland.

It localises to the secreted. The enzyme catalyses a 1,2-diacyl-sn-glycero-3-phosphocholine + H2O = a 1-acyl-sn-glycero-3-phosphocholine + a fatty acid + H(+). In terms of biological role, phospholipase toxin, which catalyzes the calcium-dependent hydrolysis of the 2-acyl groups in 3-sn-phosphoglycerides. Inhibits both skeletal (RYR1) and cardiac (RYR2) ryanodine receptors (calcium release channels). Probably blocks ryanodine receptors by generating a lipid product. This is Phospholipase A2 large subunit from Chersonesometrus fulvipes (Indian black scorpion).